Here is a 356-residue protein sequence, read N- to C-terminus: Altered inheritance of mitochondria protein 23, mitochondrial (356 aa).

A mitochondrion-targeting transit peptide spans Met1–Asp32.

The protein belongs to the AIM23 family.

It localises to the mitochondrion. The protein is Altered inheritance of mitochondria protein 23, mitochondrial (AIM23) of Saccharomyces cerevisiae (strain ATCC 204508 / S288c) (Baker's yeast).